The chain runs to 256 residues: Trypsin alpha (256 aa).

The first 22 residues, 1–22 (MLKIVILLSAVVCALGGTVPEG), serve as a signal peptide directing secretion. Residues 23–30 (LLPQLDGR) constitute a propeptide, activation peptide. Residues 31-254 (IVGGSATTIS…LRSWVVSTAN (224 aa)) enclose the Peptidase S1 domain. A disulfide bond links C56 and C72. Active-site charge relay system residues include H71 and D116. Disulfide bonds link C180-C197 and C206-C230. S210 functions as the Charge relay system in the catalytic mechanism.

The protein belongs to the peptidase S1 family. As to expression, synthesized in the midgut of both larvae and adults, primarily in the ventriculus and gastric caeca.

The protein localises to the secreted. It localises to the extracellular space. It catalyses the reaction Preferential cleavage: Arg-|-Xaa, Lys-|-Xaa.. This chain is Trypsin alpha (alphaTry), found in Drosophila melanogaster (Fruit fly).